A 125-amino-acid polypeptide reads, in one-letter code: Large ribosomal subunit protein bL12 (125 aa).

Belongs to the bacterial ribosomal protein bL12 family. Homodimer. Part of the ribosomal stalk of the 50S ribosomal subunit. Forms a multimeric L10(L12)X complex, where L10 forms an elongated spine to which 2 to 4 L12 dimers bind in a sequential fashion. Binds GTP-bound translation factors.

In terms of biological role, forms part of the ribosomal stalk which helps the ribosome interact with GTP-bound translation factors. Is thus essential for accurate translation. The protein is Large ribosomal subunit protein bL12 of Bradyrhizobium sp. (strain BTAi1 / ATCC BAA-1182).